The primary structure comprises 391 residues: Arsenite methyltransferase (391 aa).

The tract at residues 1 to 126 (MELWTHPTPA…TMVADRDPEE (126 aa)) is disordered. The segment covering 28 to 39 (CSQPWATTPGTN) has biased composition (polar residues). A compositionally biased stretch (low complexity) spans 40–65 (SSDASRTPTTASASATSKPQSASARA). Positions 102 to 116 (KRSTTCEATMSNDNE) are enriched in polar residues.

Belongs to the methyltransferase superfamily. Arsenite methyltransferase family.

It catalyses the reaction arsenic triglutathione + [thioredoxin]-dithiol + S-adenosyl-L-methionine + 2 H2O = methylarsonous acid + [thioredoxin]-disulfide + 3 glutathione + S-adenosyl-L-homocysteine + H(+). The catalysed reaction is arsenic triglutathione + 2 [thioredoxin]-dithiol + 2 S-adenosyl-L-methionine + H2O = dimethylarsinous acid + 2 [thioredoxin]-disulfide + 3 glutathione + 2 S-adenosyl-L-homocysteine + 2 H(+). It carries out the reaction arsenic triglutathione + 3 [thioredoxin]-dithiol + 3 S-adenosyl-L-methionine = trimethylarsine + 3 [thioredoxin]-disulfide + 3 glutathione + 3 S-adenosyl-L-homocysteine + 3 H(+). Its function is as follows. Catalyzes the transfer of a methyl group from AdoMet to arsenite, producing methylated arsenicals. This is Arsenite methyltransferase from Halobacterium salinarum (strain ATCC 700922 / JCM 11081 / NRC-1) (Halobacterium halobium).